Consider the following 253-residue polypeptide: Trypsin delta (253 aa).

The N-terminal stretch at 1 to 22 is a signal peptide; sequence MLKFVILLSAVACALGGTVPEG. A propeptide spans 23–30 (activation peptide); that stretch reads LLPQLDGR. The Peptidase S1 domain occupies 31-253; it reads IVGGSATTIS…ALRSWVISNA (223 aa). Cysteine 56 and cysteine 72 are disulfide-bonded. Residues histidine 71 and aspartate 116 each act as charge relay system in the active site. 2 disulfide bridges follow: cysteine 180-cysteine 197 and cysteine 206-cysteine 230. The Charge relay system role is filled by serine 210.

This sequence belongs to the peptidase S1 family.

The protein resides in the secreted. Its subcellular location is the extracellular space. It carries out the reaction Preferential cleavage: Arg-|-Xaa, Lys-|-Xaa.. The polypeptide is Trypsin delta (Drosophila melanogaster (Fruit fly)).